A 61-amino-acid polypeptide reads, in one-letter code: MAKKSMMIKAARSNKFKVRKYNRCPLCGRPRAYYRKFDMCRICLRKLALEGKLPGVIKSSW.

The Zn(2+) site is built by Cys24, Cys27, Cys40, and Cys43.

This sequence belongs to the universal ribosomal protein uS14 family. Zinc-binding uS14 subfamily. As to quaternary structure, part of the 30S ribosomal subunit. Contacts proteins S3 and S10. It depends on Zn(2+) as a cofactor.

Binds 16S rRNA, required for the assembly of 30S particles and may also be responsible for determining the conformation of the 16S rRNA at the A site. This Syntrophotalea carbinolica (strain DSM 2380 / NBRC 103641 / GraBd1) (Pelobacter carbinolicus) protein is Small ribosomal subunit protein uS14.